Here is a 303-residue protein sequence, read N- to C-terminus: MRIIFMGSPEFSVVALSSILNNTEHKIVSVYTRVPKPAGRGKVLTKTPIHTVAEMHGLTVYTPKSLKRIEEQDRIKELNPDVIVVVAYGLIIPKEVLSIPKYGCINIHPSLLPRWRGAAPIHYAILHGDSQTGVTIMQMNEGWDEGDILLQKKLSIDEQDNIETLSNKLSNLGGAMLVEVLNNIDNLVPVAQNEDNATYTNKIEDFHIDINETAEVACRRIRALYPRAFVFFNGKRLRILQASYYYDDSISSLKPSSILNSGMHIKCKGNTILVPLVVQMEGKTLCSIKDFVCGYNVKDYSIT.

Serine 110–proline 113 is a binding site for (6S)-5,6,7,8-tetrahydrofolate.

It belongs to the Fmt family.

It carries out the reaction L-methionyl-tRNA(fMet) + (6R)-10-formyltetrahydrofolate = N-formyl-L-methionyl-tRNA(fMet) + (6S)-5,6,7,8-tetrahydrofolate + H(+). Functionally, attaches a formyl group to the free amino group of methionyl-tRNA(fMet). The formyl group appears to play a dual role in the initiator identity of N-formylmethionyl-tRNA by promoting its recognition by IF2 and preventing the misappropriation of this tRNA by the elongation apparatus. This chain is Methionyl-tRNA formyltransferase, found in Ehrlichia ruminantium (strain Gardel).